The sequence spans 283 residues: Elongation factor Ts (283 aa).

Residues 80 to 83 are involved in Mg(2+) ion dislocation from EF-Tu; the sequence is TDFV.

Belongs to the EF-Ts family.

The protein localises to the cytoplasm. Functionally, associates with the EF-Tu.GDP complex and induces the exchange of GDP to GTP. It remains bound to the aminoacyl-tRNA.EF-Tu.GTP complex up to the GTP hydrolysis stage on the ribosome. This chain is Elongation factor Ts, found in Actinobacillus pleuropneumoniae serotype 3 (strain JL03).